The following is a 350-amino-acid chain: Eukaryotic translation initiation factor 3 subunit I (350 aa).

WD repeat units follow at residues 8 to 49, 51 to 89, 91 to 135, 149 to 188, 198 to 240, and 296 to 335; these read GHER…GTLE, HQGV…CVYT, DSPS…ATLS, SEGS…LVTS, EKNV…KVYK, and GHFG…QDFL.

This sequence belongs to the eIF-3 subunit I family. In terms of assembly, component of the eukaryotic translation initiation factor 3 (eIF-3) complex.

It is found in the cytoplasm. Its function is as follows. Component of the eukaryotic translation initiation factor 3 (eIF-3) complex, which is involved in protein synthesis of a specialized repertoire of mRNAs and, together with other initiation factors, stimulates binding of mRNA and methionyl-tRNAi to the 40S ribosome. The eIF-3 complex specifically targets and initiates translation of a subset of mRNAs involved in cell proliferation. This is Eukaryotic translation initiation factor 3 subunit I from Candida albicans (strain SC5314 / ATCC MYA-2876) (Yeast).